The chain runs to 142 residues: MFANVGWGEMLVLVIAGLVILGPERLPGAIRWTAGAVRQARDYVTGATSQLREELGTDFDDLREPLSELQRLRGMTPRAALTKHLLDGDDSIFTGKFDQNGKSEKPEQKPEKPQSAPGPAAAVPDQPAGGRSGSTPYDTDAT.

The helical transmembrane segment at 2-22 threads the bilayer; that stretch reads FANVGWGEMLVLVIAGLVILG. Positions 89–142 are disordered; that stretch reads DDSIFTGKFDQNGKSEKPEQKPEKPQSAPGPAAAVPDQPAGGRSGSTPYDTDAT. Over residues 99–112 the composition is skewed to basic and acidic residues; the sequence is QNGKSEKPEQKPEK. Over residues 133–142 the composition is skewed to polar residues; that stretch reads GSTPYDTDAT.

The protein belongs to the TatB family. As to quaternary structure, the Tat system comprises two distinct complexes: a TatABC complex, containing multiple copies of TatA, TatB and TatC subunits, and a separate TatA complex, containing only TatA subunits. Substrates initially bind to the TatABC complex, which probably triggers association of the separate TatA complex to form the active translocon.

It is found in the cell membrane. Part of the twin-arginine translocation (Tat) system that transports large folded proteins containing a characteristic twin-arginine motif in their signal peptide across membranes. Together with TatC, TatB is part of a receptor directly interacting with Tat signal peptides. TatB may form an oligomeric binding site that transiently accommodates folded Tat precursor proteins before their translocation. This is Sec-independent protein translocase protein TatB from Mycolicibacterium vanbaalenii (strain DSM 7251 / JCM 13017 / BCRC 16820 / KCTC 9966 / NRRL B-24157 / PYR-1) (Mycobacterium vanbaalenii).